The primary structure comprises 368 residues: Histidinol-phosphate aminotransferase (368 aa).

Position 228 is an N6-(pyridoxal phosphate)lysine (Lys228).

The protein belongs to the class-II pyridoxal-phosphate-dependent aminotransferase family. Histidinol-phosphate aminotransferase subfamily. As to quaternary structure, homodimer. Pyridoxal 5'-phosphate serves as cofactor.

The catalysed reaction is L-histidinol phosphate + 2-oxoglutarate = 3-(imidazol-4-yl)-2-oxopropyl phosphate + L-glutamate. Its pathway is amino-acid biosynthesis; L-histidine biosynthesis; L-histidine from 5-phospho-alpha-D-ribose 1-diphosphate: step 7/9. This Methylobacillus flagellatus protein is Histidinol-phosphate aminotransferase (hisC).